We begin with the raw amino-acid sequence, 347 residues long: NADH-quinone oxidoreductase subunit H (347 aa).

8 helical membrane-spanning segments follow: residues Ile25–Met45, Phe95–Ile115, Ile128–Gly148, Ile168–Phe188, Gly200–Val220, Phe251–Phe271, Phe284–Leu304, and Val324–Ser344.

It belongs to the complex I subunit 1 family. In terms of assembly, NDH-1 is composed of 14 different subunits. Subunits NuoA, H, J, K, L, M, N constitute the membrane sector of the complex.

The protein localises to the cell inner membrane. The enzyme catalyses a quinone + NADH + 5 H(+)(in) = a quinol + NAD(+) + 4 H(+)(out). Functionally, NDH-1 shuttles electrons from NADH, via FMN and iron-sulfur (Fe-S) centers, to quinones in the respiratory chain. The immediate electron acceptor for the enzyme in this species is believed to be ubiquinone. Couples the redox reaction to proton translocation (for every two electrons transferred, four hydrogen ions are translocated across the cytoplasmic membrane), and thus conserves the redox energy in a proton gradient. This subunit may bind ubiquinone. This is NADH-quinone oxidoreductase subunit H from Psychrobacter cryohalolentis (strain ATCC BAA-1226 / DSM 17306 / VKM B-2378 / K5).